A 183-amino-acid chain; its full sequence is Ribosome-recycling factor (183 aa).

Belongs to the RRF family.

Its subcellular location is the cytoplasm. Responsible for the release of ribosomes from messenger RNA at the termination of protein biosynthesis. May increase the efficiency of translation by recycling ribosomes from one round of translation to another. This Acetivibrio thermocellus (strain ATCC 27405 / DSM 1237 / JCM 9322 / NBRC 103400 / NCIMB 10682 / NRRL B-4536 / VPI 7372) (Clostridium thermocellum) protein is Ribosome-recycling factor.